Consider the following 469-residue polypeptide: Interstitial collagenase (469 aa).

Positions 1–19 are cleaved as a signal peptide; sequence MFSLLLLLLLLCNTGSHGF. Positions 20–99 are cleaved as a propeptide — activation peptide; sequence PAATSETQEQ…PRCGVPDVAE (80 aa). Position 57 is a phosphoserine (S57). The Cysteine switch signature appears at 90–97; the sequence is PRCGVPDV. C92 lines the Zn(2+) pocket. The N-linked (GlcNAc...) asparagine glycan is linked to N120. D124 and D158 together coordinate Ca(2+). Zn(2+)-binding residues include H168 and D170. Positions 175, 176, 178, and 180 each coordinate Ca(2+). H183 lines the Zn(2+) pocket. Residues G190, G192, and D194 each contribute to the Ca(2+) site. H196 is a Zn(2+) binding site. Ca(2+) contacts are provided by D198, E199, and E201. H218 is a Zn(2+) binding site. E219 is an active-site residue. The Zn(2+) site is built by H222 and H228. Residue T274 is modified to Phosphothreonine. Hemopexin repeat units lie at residues 275–324, 325–371, 374–422, and 423–466; these read PQVC…WPQV, PNGL…FGFP, VKNI…FPGI, and GNKV…WFNC. An intrachain disulfide couples C278 to C466. The Ca(2+) site is built by D285 and Q329. Y360 is subject to Phosphotyrosine; by PKDCC. Ca(2+) is bound by residues D378 and D427.

This sequence belongs to the peptidase M10A family. Ca(2+) serves as cofactor. Requires Zn(2+) as cofactor. Post-translationally, undergoes autolytic cleavage to produce a N-terminal fragment having reduced collagenolytic activity. Tyrosine phosphorylated in platelets by PKDCC/VLK.

It localises to the secreted. It is found in the extracellular space. The protein localises to the extracellular matrix. It catalyses the reaction Cleavage of the triple helix of collagen at about three-quarters of the length of the molecule from the N-terminus, at 775-Gly-|-Ile-776 in the alpha1(I) chain. Cleaves synthetic substrates and alpha-macroglobulins at bonds where P1' is a hydrophobic residue.. Can be activated without removal of the activation peptide. Functionally, cleaves collagens of types I, II, and III at one site in the helical domain. Also cleaves collagens of types VII and X. The sequence is that of Interstitial collagenase (MMP1) from Sus scrofa (Pig).